We begin with the raw amino-acid sequence, 132 residues long: Small ribosomal subunit protein uS8 (132 aa).

The protein belongs to the universal ribosomal protein uS8 family. Part of the 30S ribosomal subunit. Contacts proteins S5 and S12.

Its function is as follows. One of the primary rRNA binding proteins, it binds directly to 16S rRNA central domain where it helps coordinate assembly of the platform of the 30S subunit. The sequence is that of Small ribosomal subunit protein uS8 from Bradyrhizobium sp. (strain ORS 278).